The chain runs to 301 residues: Lycopene elongase/hydratase (301 aa).

The interval 1-20 (MSADMAAQSESGEGGDDGRA) is disordered. 9 helical membrane-spanning segments follow: residues 39–59 (FWLY…SALA), 61–81 (LFGL…NVFL), 110–130 (PVNT…FAVA), 133–153 (VAWP…APPF), 160–180 (LLDS…YAAV), 186–206 (PMLA…FSAI), 229–249 (TYWY…AVDL), 252–272 (GALL…GVDV), and 276–296 (YWWY…GALW).

Belongs to the UbiA prenyltransferase family.

The protein resides in the cell membrane. The catalysed reaction is all-trans-lycopene + dimethylallyl diphosphate + H2O = dihydroisopentenyldehydrorhodopin + diphosphate. It catalyses the reaction isopentenyldehydrorhodopin + dimethylallyl diphosphate + H2O = dihydrobisanhydrobacterioruberin + diphosphate. Its pathway is carotenoid biosynthesis. In terms of biological role, involved in the biosynthesis of the acyclic C50 carotenoid bacterioruberin (BR). Acts as a bifunctional elongase/hydratase that catalyzes the elongation of lycopene by attaching a C(5) isoprene unit at C-2, as well as the hydroxylation of the previous end of the molecule. The enzyme acts at both ends of the substrate, and catalyzes the conversion of lycopene to the C(45) intermediate dihydroisopentenyldehydrorhodopin (DH-IDR) and the conversion of isopentenyldehydrorhodopin (IDR) to the C(50) carotenoid dihydrobisanhydrobacterioruberin (DH-BABR). Can also catalyze the conversion of lycopene to tetrahydrobisanhydrobacterioruberin (TH-BABR). The sequence is that of Lycopene elongase/hydratase from Haloferax volcanii (strain ATCC 29605 / DSM 3757 / JCM 8879 / NBRC 14742 / NCIMB 2012 / VKM B-1768 / DS2) (Halobacterium volcanii).